Consider the following 619-residue polypeptide: 1-deoxy-D-xylulose-5-phosphate synthase (619 aa).

Thiamine diphosphate contacts are provided by residues histidine 74 and 115 to 117 (GHS). Aspartate 146 is a binding site for Mg(2+). Thiamine diphosphate contacts are provided by residues 147-148 (GA), asparagine 175, tyrosine 285, and glutamate 365. Asparagine 175 is a binding site for Mg(2+).

This sequence belongs to the transketolase family. DXPS subfamily. As to quaternary structure, homodimer. Requires Mg(2+) as cofactor. It depends on thiamine diphosphate as a cofactor.

It carries out the reaction D-glyceraldehyde 3-phosphate + pyruvate + H(+) = 1-deoxy-D-xylulose 5-phosphate + CO2. It functions in the pathway metabolic intermediate biosynthesis; 1-deoxy-D-xylulose 5-phosphate biosynthesis; 1-deoxy-D-xylulose 5-phosphate from D-glyceraldehyde 3-phosphate and pyruvate: step 1/1. Its function is as follows. Catalyzes the acyloin condensation reaction between C atoms 2 and 3 of pyruvate and glyceraldehyde 3-phosphate to yield 1-deoxy-D-xylulose-5-phosphate (DXP). This is 1-deoxy-D-xylulose-5-phosphate synthase from Clostridium perfringens (strain ATCC 13124 / DSM 756 / JCM 1290 / NCIMB 6125 / NCTC 8237 / Type A).